A 399-amino-acid chain; its full sequence is Tryptophan synthase beta chain (399 aa).

The residue at position 90 (lysine 90) is an N6-(pyridoxal phosphate)lysine.

The protein belongs to the TrpB family. Tetramer of two alpha and two beta chains. Requires pyridoxal 5'-phosphate as cofactor.

The enzyme catalyses (1S,2R)-1-C-(indol-3-yl)glycerol 3-phosphate + L-serine = D-glyceraldehyde 3-phosphate + L-tryptophan + H2O. It participates in amino-acid biosynthesis; L-tryptophan biosynthesis; L-tryptophan from chorismate: step 5/5. In terms of biological role, the beta subunit is responsible for the synthesis of L-tryptophan from indole and L-serine. In Bacillus pumilus (strain SAFR-032), this protein is Tryptophan synthase beta chain.